The chain runs to 355 residues: Countin-like protein (355 aa).

Positions 1 to 27 are cleaved as a signal peptide; that stretch reads MNKSLFSLILLIITIFNLASNINIVSA. Residues 63-83 are disordered; the sequence is NNHEDNNNNNNNNNNNNNAYN. Over residues 69–83 the composition is skewed to low complexity; that stretch reads NNNNNNNNNNNNAYN. Residues 93–177 enclose the Saposin B-type domain; it reads GDIECVVCLD…ELITACSTPK (85 aa). 3 cysteine pairs are disulfide-bonded: C97–C173, C100–C167, and C128–C140. N-linked (GlcNAc...) asparagine glycans are attached at residues N132, N209, N242, N253, N254, N282, and N303. Residues 290-355 form a disordered region; sequence ISNPTPTPTP…SSHYKNKINK (66 aa). The span at 301-342 shows a compositional bias: low complexity; that stretch reads PSNSTTPTPTPTNSTPTPTSTSTPTSTPTSTPTPTPTSSSST. The span at 345–355 shows a compositional bias: basic residues; the sequence is HSSHYKNKINK.

The protein belongs to the countin family.

Its subcellular location is the secreted. The chain is Countin-like protein from Dictyostelium discoideum (Social amoeba).